The sequence spans 367 residues: Centromere protein L (367 aa).

Belongs to the CENP-L/IML3 family.

It localises to the nucleus. It is found in the chromosome. The protein resides in the centromere. Functionally, probable component of a centromeric complex involved in assembly of kinetochore proteins, mitotic progression and chromosome segregation. In Danio rerio (Zebrafish), this protein is Centromere protein L (cenpl).